The chain runs to 142 residues: Large ribosomal subunit protein uL13 (142 aa).

Belongs to the universal ribosomal protein uL13 family. As to quaternary structure, part of the 50S ribosomal subunit.

Its function is as follows. This protein is one of the early assembly proteins of the 50S ribosomal subunit, although it is not seen to bind rRNA by itself. It is important during the early stages of 50S assembly. The protein is Large ribosomal subunit protein uL13 of Pseudomonas entomophila (strain L48).